We begin with the raw amino-acid sequence, 338 residues long: tRNA N6-adenosine threonylcarbamoyltransferase (338 aa).

His-110 and His-114 together coordinate Fe cation. Substrate contacts are provided by residues 132–136 (LLSGG), Asp-165, Gly-178, and Asn-274. Asp-298 lines the Fe cation pocket.

Belongs to the KAE1 / TsaD family. The cofactor is Fe(2+).

Its subcellular location is the cytoplasm. The catalysed reaction is L-threonylcarbamoyladenylate + adenosine(37) in tRNA = N(6)-L-threonylcarbamoyladenosine(37) in tRNA + AMP + H(+). Required for the formation of a threonylcarbamoyl group on adenosine at position 37 (t(6)A37) in tRNAs that read codons beginning with adenine. Is involved in the transfer of the threonylcarbamoyl moiety of threonylcarbamoyl-AMP (TC-AMP) to the N6 group of A37, together with TsaE and TsaB. TsaD likely plays a direct catalytic role in this reaction. This chain is tRNA N6-adenosine threonylcarbamoyltransferase, found in Borrelia garinii subsp. bavariensis (strain ATCC BAA-2496 / DSM 23469 / PBi) (Borreliella bavariensis).